A 162-amino-acid chain; its full sequence is Protein mmf1, mitochondrial (162 aa).

The protein belongs to the RutC family.

It is found in the mitochondrion. Its subcellular location is the cytoplasm. Its function is as follows. Plays a role in the maintenance of mitochondrial DNA. This is Protein mmf1, mitochondrial (mmf1) from Schizosaccharomyces pombe (strain 972 / ATCC 24843) (Fission yeast).